Reading from the N-terminus, the 435-residue chain is U-box domain-containing protein 21 (435 aa).

Residues 30-104 (TIPPEFQCPI…QGWCVEKGSP (75 aa)) enclose the U-box domain. ARM repeat units lie at residues 202–241 (LEGI…EILS), 245–285 (TRVH…QMVL), 288–327 (PEIA…AICE), and 329–369 (EHGR…KLWK).

It catalyses the reaction S-ubiquitinyl-[E2 ubiquitin-conjugating enzyme]-L-cysteine + [acceptor protein]-L-lysine = [E2 ubiquitin-conjugating enzyme]-L-cysteine + N(6)-ubiquitinyl-[acceptor protein]-L-lysine.. It participates in protein modification; protein ubiquitination. Functions as an E3 ubiquitin ligase. This Arabidopsis thaliana (Mouse-ear cress) protein is U-box domain-containing protein 21 (PUB21).